The sequence spans 627 residues: Pescadillo homolog (627 aa).

The BRCT domain occupies 321-414; the sequence is RLRTLFKGLK…QLLPTNKYFI (94 aa). Disordered regions lie at residues 436–471, 489–562, and 596–627; these read PEEK…AVDQ, YKKY…LQAR, and FEAG…KLGK. 2 positions are modified to phosphoserine: serine 453 and serine 457. 2 stretches are compositionally biased toward acidic residues: residues 453 to 471 and 498 to 521; these read SDDD…AVDQ and VNED…EELD. The span at 522 to 533 shows a compositional bias: basic and acidic residues; the sequence is EQAKRLKEEKQK. Residues 540 to 549 are compositionally biased toward basic residues; that stretch reads KVHKVNKRQL. Composition is skewed to basic and acidic residues over residues 550–559 and 596–605; these read HKAEVDEHRL and FEAGEKEARK. Over residues 616–627 the composition is skewed to low complexity; it reads AAAAAKASKLGK.

This sequence belongs to the pescadillo family.

Its subcellular location is the nucleus. It is found in the nucleolus. It localises to the nucleoplasm. Its function is as follows. Required for maturation of ribosomal RNAs and formation of the large ribosomal subunit. This is Pescadillo homolog from Drosophila ananassae (Fruit fly).